A 236-amino-acid chain; its full sequence is Leucyl/phenylalanyl-tRNA--protein transferase (236 aa).

This sequence belongs to the L/F-transferase family.

It is found in the cytoplasm. It carries out the reaction N-terminal L-lysyl-[protein] + L-leucyl-tRNA(Leu) = N-terminal L-leucyl-L-lysyl-[protein] + tRNA(Leu) + H(+). It catalyses the reaction N-terminal L-arginyl-[protein] + L-leucyl-tRNA(Leu) = N-terminal L-leucyl-L-arginyl-[protein] + tRNA(Leu) + H(+). The enzyme catalyses L-phenylalanyl-tRNA(Phe) + an N-terminal L-alpha-aminoacyl-[protein] = an N-terminal L-phenylalanyl-L-alpha-aminoacyl-[protein] + tRNA(Phe). Functions in the N-end rule pathway of protein degradation where it conjugates Leu, Phe and, less efficiently, Met from aminoacyl-tRNAs to the N-termini of proteins containing an N-terminal arginine or lysine. The protein is Leucyl/phenylalanyl-tRNA--protein transferase of Shewanella pealeana (strain ATCC 700345 / ANG-SQ1).